The primary structure comprises 560 residues: Trans-activating transcriptional regulatory protein (560 aa).

The segment at 106–133 (DSMKRKASELDSDSDSGESSKGKKRVIK) is disordered.

It belongs to the nucleopolyhedrovirus IE-1 protein family.

In terms of biological role, regulatory transcriptional protein, which trans-activates gene expression from early baculovirus promoters. Can also trans-activate its own promoter, suggesting that it is autoregulated during normal infection of insect cells. This Choristoneura fumiferana nuclear polyhedrosis virus (CfMNPV) protein is Trans-activating transcriptional regulatory protein (IE1).